A 461-amino-acid chain; its full sequence is Bifunctional protein GlmU (461 aa).

The pyrophosphorylase stretch occupies residues 1-235 (MKAIILAAGL…ITEIFGVNDR (235 aa)). UDP-N-acetyl-alpha-D-glucosamine is bound by residues 6 to 9 (LAAG), K20, Q71, and 77 to 78 (GT). Residue D102 participates in Mg(2+) binding. Residues G145, E160, N175, and N233 each contribute to the UDP-N-acetyl-alpha-D-glucosamine site. N233 provides a ligand contact to Mg(2+). The tract at residues 236 to 256 (WELSFAESVIKMRILENLARS) is linker. The interval 257–461 (GVTIHSPESV…LEDKSKVKDE (205 aa)) is N-acetyltransferase. UDP-N-acetyl-alpha-D-glucosamine is bound by residues R339 and K357. H369 acts as the Proton acceptor in catalysis. The UDP-N-acetyl-alpha-D-glucosamine site is built by Y372 and N383. Residues A386, S411, G429, and R446 each contribute to the acetyl-CoA site.

In the N-terminal section; belongs to the N-acetylglucosamine-1-phosphate uridyltransferase family. It in the C-terminal section; belongs to the transferase hexapeptide repeat family. As to quaternary structure, homotrimer. It depends on Mg(2+) as a cofactor.

The protein localises to the cytoplasm. It catalyses the reaction alpha-D-glucosamine 1-phosphate + acetyl-CoA = N-acetyl-alpha-D-glucosamine 1-phosphate + CoA + H(+). The catalysed reaction is N-acetyl-alpha-D-glucosamine 1-phosphate + UTP + H(+) = UDP-N-acetyl-alpha-D-glucosamine + diphosphate. Its pathway is nucleotide-sugar biosynthesis; UDP-N-acetyl-alpha-D-glucosamine biosynthesis; N-acetyl-alpha-D-glucosamine 1-phosphate from alpha-D-glucosamine 6-phosphate (route II): step 2/2. It participates in nucleotide-sugar biosynthesis; UDP-N-acetyl-alpha-D-glucosamine biosynthesis; UDP-N-acetyl-alpha-D-glucosamine from N-acetyl-alpha-D-glucosamine 1-phosphate: step 1/1. The protein operates within bacterial outer membrane biogenesis; LPS lipid A biosynthesis. Its function is as follows. Catalyzes the last two sequential reactions in the de novo biosynthetic pathway for UDP-N-acetylglucosamine (UDP-GlcNAc). The C-terminal domain catalyzes the transfer of acetyl group from acetyl coenzyme A to glucosamine-1-phosphate (GlcN-1-P) to produce N-acetylglucosamine-1-phosphate (GlcNAc-1-P), which is converted into UDP-GlcNAc by the transfer of uridine 5-monophosphate (from uridine 5-triphosphate), a reaction catalyzed by the N-terminal domain. This chain is Bifunctional protein GlmU, found in Hydrogenobaculum sp. (strain Y04AAS1).